The following is a 345-amino-acid chain: Phosphoribosylformylglycinamidine cyclo-ligase (345 aa).

Belongs to the AIR synthase family.

Its subcellular location is the cytoplasm. The enzyme catalyses 2-formamido-N(1)-(5-O-phospho-beta-D-ribosyl)acetamidine + ATP = 5-amino-1-(5-phospho-beta-D-ribosyl)imidazole + ADP + phosphate + H(+). The protein operates within purine metabolism; IMP biosynthesis via de novo pathway; 5-amino-1-(5-phospho-D-ribosyl)imidazole from N(2)-formyl-N(1)-(5-phospho-D-ribosyl)glycinamide: step 2/2. This is Phosphoribosylformylglycinamidine cyclo-ligase from Shewanella oneidensis (strain ATCC 700550 / JCM 31522 / CIP 106686 / LMG 19005 / NCIMB 14063 / MR-1).